The chain runs to 327 residues: Interleukin-12 subunit beta (327 aa).

An N-terminal signal peptide occupies residues 1–22 (MHPQQLVVSWFSLVLLASPIVA). Positions 23–106 (IWELEKNVYI…LSRSLLLLHK (84 aa)) constitute an Ig-like C2-type domain. Cys-50 and Cys-90 are oxidised to a cystine. Residue Asn-223 is glycosylated (N-linked (GlcNAc...) asparagine). Positions 238–327 (PPKNLQLKPL…WSEWASVSCS (90 aa)) constitute a Fibronectin type-III domain.

This sequence belongs to the IL-12B family. As to quaternary structure, heterodimer with IL12A; disulfide-linked. The heterodimer is known as interleukin IL-12. Heterodimer with IL23A; disulfide-linked. The heterodimer is known as interleukin IL-23. Also secreted as a monomer. Interacts with NBR1; this interaction promotes IL-12 secretion.

Its function is as follows. Cytokine that can act as a growth factor for activated T and NK cells, enhance the lytic activity of NK/lymphokine-activated killer cells, and stimulate the production of IFN-gamma by resting PBMC. Functionally, associates with IL23A to form the IL-23 interleukin, a heterodimeric cytokine which functions in innate and adaptive immunity. IL-23 may constitute with IL-17 an acute response to infection in peripheral tissues. IL-23 binds to a heterodimeric receptor complex composed of IL12RB1 and IL23R, activates the Jak-Stat signaling cascade, stimulates memory rather than naive T-cells and promotes production of pro-inflammatory cytokines. IL-23 induces autoimmune inflammation and thus may be responsible for autoimmune inflammatory diseases and may be important for tumorigenesis. In Bubalus bubalis (Domestic water buffalo), this protein is Interleukin-12 subunit beta (IL12B).